Reading from the N-terminus, the 498-residue chain is ATP synthase subunit beta, chloroplastic (498 aa).

Glycine 172 to threonine 179 provides a ligand contact to ATP.

The protein belongs to the ATPase alpha/beta chains family. In terms of assembly, F-type ATPases have 2 components, CF(1) - the catalytic core - and CF(0) - the membrane proton channel. CF(1) has five subunits: alpha(3), beta(3), gamma(1), delta(1), epsilon(1). CF(0) has four main subunits: a(1), b(1), b'(1) and c(9-12).

Its subcellular location is the plastid. The protein resides in the chloroplast thylakoid membrane. The catalysed reaction is ATP + H2O + 4 H(+)(in) = ADP + phosphate + 5 H(+)(out). Functionally, produces ATP from ADP in the presence of a proton gradient across the membrane. The catalytic sites are hosted primarily by the beta subunits. This chain is ATP synthase subunit beta, chloroplastic, found in Calycanthus floridus var. glaucus (Eastern sweetshrub).